The chain runs to 238 residues: Pyridoxine 5'-phosphate synthase (238 aa).

Asn-7 is a 3-amino-2-oxopropyl phosphate binding site. 9-10 (DH) provides a ligand contact to 1-deoxy-D-xylulose 5-phosphate. Arg-18 provides a ligand contact to 3-amino-2-oxopropyl phosphate. His-43 (proton acceptor) is an active-site residue. 2 residues coordinate 1-deoxy-D-xylulose 5-phosphate: Arg-45 and His-50. Glu-70 serves as the catalytic Proton acceptor. Residue Thr-100 participates in 1-deoxy-D-xylulose 5-phosphate binding. His-190 functions as the Proton donor in the catalytic mechanism. 3-amino-2-oxopropyl phosphate contacts are provided by residues Gly-191 and 212-213 (GH).

Belongs to the PNP synthase family. As to quaternary structure, homooctamer; tetramer of dimers.

The protein resides in the cytoplasm. It catalyses the reaction 3-amino-2-oxopropyl phosphate + 1-deoxy-D-xylulose 5-phosphate = pyridoxine 5'-phosphate + phosphate + 2 H2O + H(+). It functions in the pathway cofactor biosynthesis; pyridoxine 5'-phosphate biosynthesis; pyridoxine 5'-phosphate from D-erythrose 4-phosphate: step 5/5. Functionally, catalyzes the complicated ring closure reaction between the two acyclic compounds 1-deoxy-D-xylulose-5-phosphate (DXP) and 3-amino-2-oxopropyl phosphate (1-amino-acetone-3-phosphate or AAP) to form pyridoxine 5'-phosphate (PNP) and inorganic phosphate. This Prochlorococcus marinus subsp. pastoris (strain CCMP1986 / NIES-2087 / MED4) protein is Pyridoxine 5'-phosphate synthase.